The following is a 209-amino-acid chain: Leucyl/phenylalanyl-tRNA--protein transferase (209 aa).

It belongs to the L/F-transferase family.

The protein resides in the cytoplasm. It catalyses the reaction N-terminal L-lysyl-[protein] + L-leucyl-tRNA(Leu) = N-terminal L-leucyl-L-lysyl-[protein] + tRNA(Leu) + H(+). It carries out the reaction N-terminal L-arginyl-[protein] + L-leucyl-tRNA(Leu) = N-terminal L-leucyl-L-arginyl-[protein] + tRNA(Leu) + H(+). The catalysed reaction is L-phenylalanyl-tRNA(Phe) + an N-terminal L-alpha-aminoacyl-[protein] = an N-terminal L-phenylalanyl-L-alpha-aminoacyl-[protein] + tRNA(Phe). Functions in the N-end rule pathway of protein degradation where it conjugates Leu, Phe and, less efficiently, Met from aminoacyl-tRNAs to the N-termini of proteins containing an N-terminal arginine or lysine. In Paramagnetospirillum magneticum (strain ATCC 700264 / AMB-1) (Magnetospirillum magneticum), this protein is Leucyl/phenylalanyl-tRNA--protein transferase.